The following is a 477-amino-acid chain: ACT domain-containing protein ACR1 (477 aa).

ACT domains are found at residues 38 to 124, 134 to 214, 283 to 358, and 361 to 441; these read LIKV…REVQ, AFEI…GDVS, MVNV…RASQ, and KLEI…MMPR. The Bipartite nuclear localization signal signature appears at 329-345; the sequence is KKNGGTLETEGQRERLR.

Expressed in flowers and siliques.

It is found in the nucleus. Its function is as follows. May bind amino acids. The protein is ACT domain-containing protein ACR1 of Arabidopsis thaliana (Mouse-ear cress).